Reading from the N-terminus, the 475-residue chain is UDP-glucosyltransferase 102 (475 aa).

UDP-alpha-D-glucose contacts are provided by residues serine 278, 344–345 (WA), 362–370 (HCGWNSTLE), and 384–387 (YGEQ).

The protein belongs to the UDP-glycosyltransferase family.

The protein operates within secondary metabolite biosynthesis; terpenoid biosynthesis. In terms of biological role, probable component of the triterpene saponins (e.g. ginsenosides) biosynthetic pathway. No detectable activity toward protopanaxatriol (PPT). This is UDP-glucosyltransferase 102 (UGT102) from Panax ginseng (Korean ginseng).